The chain runs to 231 residues: 7-cyano-7-deazaguanine synthase (231 aa).

7-17 (LSSGLDSVAAL) is an ATP binding site. Zn(2+) contacts are provided by Cys-195, Cys-203, Cys-206, and Cys-209.

It belongs to the QueC family. Zn(2+) serves as cofactor.

It carries out the reaction 7-carboxy-7-deazaguanine + NH4(+) + ATP = 7-cyano-7-deazaguanine + ADP + phosphate + H2O + H(+). It functions in the pathway purine metabolism; 7-cyano-7-deazaguanine biosynthesis. Its function is as follows. Catalyzes the ATP-dependent conversion of 7-carboxy-7-deazaguanine (CDG) to 7-cyano-7-deazaguanine (preQ(0)). This Methanosarcina barkeri (strain Fusaro / DSM 804) protein is 7-cyano-7-deazaguanine synthase.